A 999-amino-acid chain; its full sequence is Golgin subfamily A member 2 (999 aa).

Positions 1 to 11 are enriched in pro residues; the sequence is MWPPRFPPPRP. 2 disordered regions span residues 1–80 and 244–288; these read MWPP…PAPP and ARQK…YNKD. The segment at 1–86 is interaction with p115/USO1; the sequence is MWPPRFPPPR…PAPPTAATDT (86 aa). Residues Arg-18 and Arg-30 each carry the dimethylated arginine modification. A Nuclear localization signal motif is present at residues 26–49; sequence KKKLREYQQKNSPGVPAGAKKKKK. Phosphoserine occurs at positions 37, 66, 273, and 438. Residues 147–895 are a coiled coil; sequence LTSSNMKELE…VLRLVNERNE (749 aa). A compositionally biased stretch (polar residues) spans 271 to 280; it reads TLSTVSTQQK. Residues 444-468 are disordered; the sequence is SQMEEPPPPEPPAGPSEAEEQLQGE. Positions 448–457 are enriched in pro residues; it reads EPPPPEPPAG. Ser-697, Ser-934, and Ser-978 each carry phosphoserine. Positions 989–999 are interaction with GORASP1/GRASP65; the sequence is DENDEVKIMVV.

Belongs to the GOLGA2 family. As to quaternary structure, homodimer, may assemble into homohexamers. Homotetramer; forms a parallel homotetramer with a flexible rod-like structure that can give rise to I- and Y-shaped conformations. Interacts with GORASP1/GRASP65. The homooligomer forms a complex with GORASP1 with a 1:1 stoichiometry. Interacts with RAB1B that has been activated by GTP-binding. Interacts with p115/USO1; interaction with p115/USO1 inhibits interaction with STX5 and/or RAB1B. Interacts with STX5. Interacts with ZFPL1. Interacts with AKAP450/AKAP9; leading to recruit AKAP450/AKAP9 to the cis-Golgi. In terms of processing, phosphorylated at Ser-37 by CDK1 at the onset of mitosis, inhibiting the interaction with p115/USO1 and triggering Golgi disassembly. A report however suggests that Golgi disassembly is independent of phosphorylation at Ser-37. Phosphorylated at Ser-37 in prophase as the Golgi complex starts to break down, and remains phosphorylated during further breakdown and partitioning of the Golgi fragments in metaphase and anaphase. In telophase, GM130 is dephosphorylated by PP2A as the Golgi fragments start to reassemble. Post-translationally, cleaved by caspases at the onset of apoptosis. Methylation by PRMT5 is required for Golgi ribbon formation. Widely expressed. Detected in brain, kidney, lung, liver, spleen, heart, skeletal muscle, thymus and pancreas. Detected in spermatocytes. Present in oocytes during all oocyte meiotic maturation (at protein level).

It is found in the golgi apparatus. It localises to the cis-Golgi network membrane. Its subcellular location is the endoplasmic reticulum-Golgi intermediate compartment membrane. The protein localises to the cytoplasm. The protein resides in the cytoskeleton. It is found in the spindle pole. Peripheral membrane component of the cis-Golgi stack that acts as a membrane skeleton that maintains the structure of the Golgi apparatus, and as a vesicle thether that facilitates vesicle fusion to the Golgi membrane. Required for normal protein transport from the endoplasmic reticulum to the Golgi apparatus and the cell membrane. Together with p115/USO1 and STX5, involved in vesicle tethering and fusion at the cis-Golgi membrane to maintain the stacked and inter-connected structure of the Golgi apparatus. Plays a central role in mitotic Golgi disassembly: phosphorylation at Ser-37 by CDK1 at the onset of mitosis inhibits the interaction with p115/USO1, preventing tethering of COPI vesicles and thereby inhibiting transport through the Golgi apparatus during mitosis. Also plays a key role in spindle pole assembly and centrosome organization. Promotes the mitotic spindle pole assembly by activating the spindle assembly factor TPX2 to nucleate microtubules around the Golgi and capture them to couple mitotic membranes to the spindle: upon phosphorylation at the onset of mitosis, GOLGA2 interacts with importin-alpha via the nuclear localization signal region, leading to recruit importin-alpha to the Golgi membranes and liberate the spindle assembly factor TPX2 from importin-alpha. TPX2 then activates AURKA kinase and stimulates local microtubule nucleation. Upon filament assembly, nascent microtubules are further captured by GOLGA2, thus linking Golgi membranes to the spindle. Regulates the meiotic spindle pole assembly, probably via the same mechanism. Also regulates the centrosome organization. Also required for the Golgi ribbon formation and glycosylation of membrane and secretory proteins. This Mus musculus (Mouse) protein is Golgin subfamily A member 2 (Golga2).